The primary structure comprises 249 residues: Vitamin B12 import ATP-binding protein BtuD (249 aa).

The region spanning 5–233 (MQLQDVAETT…PNLAQAYGMN (229 aa)) is the ABC transporter domain. 33-40 (GPNGAGKS) lines the ATP pocket.

Belongs to the ABC transporter superfamily. Vitamin B12 importer (TC 3.A.1.13.1) family. As to quaternary structure, the complex is composed of two ATP-binding proteins (BtuD), two transmembrane proteins (BtuC) and a solute-binding protein (BtuF).

Its subcellular location is the cell inner membrane. The catalysed reaction is an R-cob(III)alamin(out) + ATP + H2O = an R-cob(III)alamin(in) + ADP + phosphate + H(+). Part of the ABC transporter complex BtuCDF involved in vitamin B12 import. Responsible for energy coupling to the transport system. This Citrobacter koseri (strain ATCC BAA-895 / CDC 4225-83 / SGSC4696) protein is Vitamin B12 import ATP-binding protein BtuD.